The chain runs to 318 residues: Bifunctional protein FolD 3 (318 aa).

NADP(+) is bound by residues 173-175 and Ile-242; that span reads GRS.

The protein belongs to the tetrahydrofolate dehydrogenase/cyclohydrolase family. In terms of assembly, homodimer.

The enzyme catalyses (6R)-5,10-methylene-5,6,7,8-tetrahydrofolate + NADP(+) = (6R)-5,10-methenyltetrahydrofolate + NADPH. It catalyses the reaction (6R)-5,10-methenyltetrahydrofolate + H2O = (6R)-10-formyltetrahydrofolate + H(+). Its pathway is one-carbon metabolism; tetrahydrofolate interconversion. Its function is as follows. Catalyzes the oxidation of 5,10-methylenetetrahydrofolate to 5,10-methenyltetrahydrofolate and then the hydrolysis of 5,10-methenyltetrahydrofolate to 10-formyltetrahydrofolate. This chain is Bifunctional protein FolD 3, found in Rubrobacter xylanophilus (strain DSM 9941 / JCM 11954 / NBRC 16129 / PRD-1).